The following is a 290-amino-acid chain: 33 kDa chaperonin (290 aa).

2 disulfide bridges follow: Cys-235–Cys-237 and Cys-268–Cys-271.

This sequence belongs to the HSP33 family. Post-translationally, under oxidizing conditions two disulfide bonds are formed involving the reactive cysteines. Under reducing conditions zinc is bound to the reactive cysteines and the protein is inactive.

Its subcellular location is the cytoplasm. Functionally, redox regulated molecular chaperone. Protects both thermally unfolding and oxidatively damaged proteins from irreversible aggregation. Plays an important role in the bacterial defense system toward oxidative stress. In Streptococcus pyogenes serotype M6 (strain ATCC BAA-946 / MGAS10394), this protein is 33 kDa chaperonin.